Reading from the N-terminus, the 435-residue chain is AMSH-like protease sst2 (435 aa).

Residues 162 to 181 (TDLLSPDSQKLSKSSSDLPQ) show a composition bias toward low complexity. A disordered region spans residues 162-185 (TDLLSPDSQKLSKSSSDLPQFDYP). Residue Thr192 is modified to Phosphothreonine. Residues 262-392 (TIYLPKLLKK…FRLLDPEGLQ (131 aa)) form the MPN domain. Residues His341, His343, Asp354, His356, Cys397, His404, and His406 each coordinate Zn(2+). The JAMM motif motif lies at 341 to 354 (HTHPTQTCFMSSVD).

It belongs to the peptidase M67C family. The cofactor is Zn(2+).

It is found in the cytoplasm. Its subcellular location is the endosome. In terms of biological role, zinc metalloprotease that specifically cleaves 'Lys-63'-linked polyubiquitin chains. Does not cleave 'Lys-48'-linked polyubiquitin chains. Plays a role in the multivesicular body (MVB) sorting pathway. Required for ubiquitin-dependent sorting of proteins into the endosome and subsequent trafficking to the vacuole. May regulate MVB sorting through deubiquitination of ubiquitinated ESCRT proteins. This chain is AMSH-like protease sst2 (sst2), found in Schizosaccharomyces pombe (strain 972 / ATCC 24843) (Fission yeast).